The primary structure comprises 181 residues: Inner membrane-spanning protein YciB (181 aa).

The next 5 membrane-spanning stretches (helical) occupy residues 19-39, 50-70, 80-100, 118-138, and 148-168; these read FFDI…QLIA, MHLI…IFHD, IVYA…KPIL, LTWY…YVAF, and FKVF…VVYL.

Belongs to the YciB family.

The protein localises to the cell inner membrane. Its function is as follows. Plays a role in cell envelope biogenesis, maintenance of cell envelope integrity and membrane homeostasis. In Shewanella amazonensis (strain ATCC BAA-1098 / SB2B), this protein is Inner membrane-spanning protein YciB.